The chain runs to 218 residues: Adenylate kinase (218 aa).

Residue 10–15 (GAGKGT) participates in ATP binding. The interval 30–59 (STGDIFREAIAKGTELGRKVQDIVNSGNLV) is NMP. AMP-binding positions include threonine 31, arginine 36, 57–59 (NLV), 85–88 (GYPR), and glutamine 92. The segment at 126-163 (TRRVCSKCGKVYNVITLPSKVEGICDDCGGTLIQRDDD) is LID. Arginine 127 is a binding site for ATP. 2 residues coordinate Zn(2+): cysteine 130 and cysteine 133. 136–137 (VY) contacts ATP. Residues cysteine 150 and cysteine 153 each contribute to the Zn(2+) site. AMP contacts are provided by arginine 160 and arginine 171. Lysine 199 serves as a coordination point for ATP.

The protein belongs to the adenylate kinase family. Monomer.

The protein resides in the cytoplasm. The catalysed reaction is AMP + ATP = 2 ADP. Its pathway is purine metabolism; AMP biosynthesis via salvage pathway; AMP from ADP: step 1/1. Functionally, catalyzes the reversible transfer of the terminal phosphate group between ATP and AMP. Plays an important role in cellular energy homeostasis and in adenine nucleotide metabolism. The protein is Adenylate kinase of Fervidobacterium nodosum (strain ATCC 35602 / DSM 5306 / Rt17-B1).